The primary structure comprises 314 residues: MTLSTNNSKNDFLDKTGPVSILGTSKGKKALLRRRLLIIQNVRNILIKKIINFDNFSNPIETYKIMLRKSLHFGHPVIQCDSGMKKYIRGQSNGKHFINLFRTKRYIRKALWYLTKYAYKRKNILFVGTAIPSARYVATTALKTKSFFVNFRWLGGMLNNWKTLRKLLQKLKTLQKEQKNKIWKNLPKKEGIARLKEKQRLEKYLKGIQMIKGFPEVVIMTSQTKDLSAARECKKMGIWNLSILDTNCDPRLADLMVPANDDSASSVKFLLFNFAKAIQAGRALSVLKKKLKNKLTKKKQTKSRAKVFLKEKKL.

This sequence belongs to the universal ribosomal protein uS2 family.

It localises to the plastid. Its subcellular location is the chloroplast. The polypeptide is Small ribosomal subunit protein uS2c (rps2) (Stigeoclonium helveticum (Green alga)).